The chain runs to 346 residues: NADH-ubiquinone oxidoreductase chain 2 (346 aa).

Transmembrane regions (helical) follow at residues 1–21, 25–45, 60–80, 95–115, 124–144, 149–169, 178–195, 200–219, 242–262, 274–294, and 326–346; these read MNPHATPVLVLSLALGTTITI, HWVLAWTGLEINTLAIIPLIS, FLTQAAASALVLFSSMTNAWA, CLLLTAAIAIKLGLVPFHFWF, LMTALLLSTLMKFPPLTLLLM, LNPALLTTMALASAALGGWMG, ILAFSSISHLGWIAIILV, LALLTFYLYTIMTSAVFMAL, ATLMLVLLSLAGLPPLTGFMP, EMTPAAMAIAMLSLLSLFFYL, and AILASLSILLLPLSPMIHAIV.

It belongs to the complex I subunit 2 family.

The protein localises to the mitochondrion inner membrane. It catalyses the reaction a ubiquinone + NADH + 5 H(+)(in) = a ubiquinol + NAD(+) + 4 H(+)(out). Core subunit of the mitochondrial membrane respiratory chain NADH dehydrogenase (Complex I) that is believed to belong to the minimal assembly required for catalysis. Complex I functions in the transfer of electrons from NADH to the respiratory chain. The immediate electron acceptor for the enzyme is believed to be ubiquinone. The sequence is that of NADH-ubiquinone oxidoreductase chain 2 (MT-ND2) from Sibirionetta formosa (Baikal teal).